A 298-amino-acid polypeptide reads, in one-letter code: Probable endonuclease 4 (298 aa).

Zn(2+) contacts are provided by His-69, His-111, Glu-146, Asp-180, His-183, His-215, Asp-228, His-230, and Glu-260.

This sequence belongs to the AP endonuclease 2 family. It depends on Zn(2+) as a cofactor.

It catalyses the reaction Endonucleolytic cleavage to 5'-phosphooligonucleotide end-products.. Functionally, endonuclease IV plays a role in DNA repair. It cleaves phosphodiester bonds at apurinic or apyrimidinic (AP) sites, generating a 3'-hydroxyl group and a 5'-terminal sugar phosphate. This Bacillus cereus (strain 03BB102) protein is Probable endonuclease 4.